The primary structure comprises 426 residues: C4-dicarboxylate transport protein (426 aa).

The next 8 helical transmembrane spans lie at 8–28, 44–64, 78–98, 148–168, 184–204, 222–242, 297–317, and 355–375; these read VLYV…HFYP, LIKM…IAGM, LLYF…ATHL, GEIL…AHVG, ILFG…FGAM, LIGT…GFIA, GYSF…LFIA, and AATL…ILGI.

The protein belongs to the dicarboxylate/amino acid:cation symporter (DAACS) (TC 2.A.23) family.

The protein localises to the cell inner membrane. Functionally, responsible for the transport of dicarboxylates such as succinate, fumarate, and malate from the periplasm across the membrane. The sequence is that of C4-dicarboxylate transport protein from Paraburkholderia phymatum (strain DSM 17167 / CIP 108236 / LMG 21445 / STM815) (Burkholderia phymatum).